Here is a 1196-residue protein sequence, read N- to C-terminus: DNA-directed RNA polymerase subunit beta (1196 aa).

This sequence belongs to the RNA polymerase beta chain family. In terms of assembly, the RNAP catalytic core consists of 2 alpha, 1 beta, 1 beta' and 1 omega subunit. When a sigma factor is associated with the core the holoenzyme is formed, which can initiate transcription.

The catalysed reaction is RNA(n) + a ribonucleoside 5'-triphosphate = RNA(n+1) + diphosphate. In terms of biological role, DNA-dependent RNA polymerase catalyzes the transcription of DNA into RNA using the four ribonucleoside triphosphates as substrates. In Lactococcus lactis subsp. lactis (strain IL1403) (Streptococcus lactis), this protein is DNA-directed RNA polymerase subunit beta.